A 564-amino-acid chain; its full sequence is DNA ligase B (564 aa).

The active-site N6-AMP-lysine intermediate is the Lys-130.

It belongs to the NAD-dependent DNA ligase family. LigB subfamily.

It catalyses the reaction NAD(+) + (deoxyribonucleotide)n-3'-hydroxyl + 5'-phospho-(deoxyribonucleotide)m = (deoxyribonucleotide)n+m + AMP + beta-nicotinamide D-nucleotide.. In terms of biological role, catalyzes the formation of phosphodiester linkages between 5'-phosphoryl and 3'-hydroxyl groups in double-stranded DNA using NAD as a coenzyme and as the energy source for the reaction. The chain is DNA ligase B from Klebsiella pneumoniae subsp. pneumoniae (strain ATCC 700721 / MGH 78578).